A 170-amino-acid chain; its full sequence is Phosphopantetheine adenylyltransferase (170 aa).

Thr-10 lines the substrate pocket. Residues 10–11 and His-18 contribute to the ATP site; that span reads TF. Lys-42, Leu-75, and Arg-89 together coordinate substrate. Residues 90-92, Glu-100, and 125-131 each bind ATP; these read GVR and YTYVASS.

Belongs to the bacterial CoaD family. In terms of assembly, homohexamer. Mg(2+) serves as cofactor.

Its subcellular location is the cytoplasm. It carries out the reaction (R)-4'-phosphopantetheine + ATP + H(+) = 3'-dephospho-CoA + diphosphate. It functions in the pathway cofactor biosynthesis; coenzyme A biosynthesis; CoA from (R)-pantothenate: step 4/5. Functionally, reversibly transfers an adenylyl group from ATP to 4'-phosphopantetheine, yielding dephospho-CoA (dPCoA) and pyrophosphate. In Chlorobium limicola (strain DSM 245 / NBRC 103803 / 6330), this protein is Phosphopantetheine adenylyltransferase.